The following is a 75-amino-acid chain: Small ribosomal subunit protein bS16 (75 aa).

It belongs to the bacterial ribosomal protein bS16 family.

This Helicobacter pylori (strain G27) protein is Small ribosomal subunit protein bS16.